Consider the following 129-residue polypeptide: Small ribosomal subunit protein eS6 (129 aa).

Residues 53–88 are disordered; it reads TGGSDTSGRPMRPDVRGVTTKEIMSDGGVGFEPTTD.

The protein belongs to the eukaryotic ribosomal protein eS6 family.

This is Small ribosomal subunit protein eS6 (rps6e) from Haloarcula marismortui (strain ATCC 43049 / DSM 3752 / JCM 8966 / VKM B-1809) (Halobacterium marismortui).